Consider the following 394-residue polypeptide: Penicillopepsin-2 (394 aa).

The signal sequence occupies residues 1 to 20; that stretch reads MVVFSKITVVLAGLATVASA. Positions 21-71 are cleaved as a propeptide — activation peptide; the sequence is VPTGTSRKSTFTVNQKARPVAQAKAINLPGMYASALSKYGAAVPASVKAAA. One can recognise a Peptidase A1 domain in the interval 87 to 391; it reads YLTPVNVGGT…DANGPRLGFA (305 aa). Asp-103 is a catalytic residue. The N-linked (GlcNAc...) asparagine glycan is linked to Asn-132. The active site involves Asp-283. The cysteines at positions 319 and 354 are disulfide-linked.

Belongs to the peptidase A1 family. As to quaternary structure, monomer.

It is found in the secreted. The catalysed reaction is Hydrolysis of proteins with broad specificity similar to that of pepsin A, preferring hydrophobic residues at P1 and P1', but also cleaving 20-Gly-|-Glu-21 in the B chain of insulin. Clots milk, and activates trypsinogen.. In terms of biological role, secreted aspartic endopeptidase that allows assimilation of proteinaceous substrates. The scissile peptide bond is attacked by a nucleophilic water molecule activated by two aspartic residues in the active site. Shows a broad primary substrate specificity. Favors hydrophobic residues at the P1 and P1' positions, but can also activate trypsinogen and hydrolyze the B chain of insulin between positions 'Gly-20' and 'Glu-21'. The polypeptide is Penicillopepsin-2 (Penicillium janthinellum (Penicillium vitale)).